The following is a 637-amino-acid chain: Tumor protein p73 (637 aa).

Residues 1–46 (MAQSTTTSPDGGTTFEHLWSSLEPDSTYFDLPQSSRGNNEVVGGTD) are transactivation. Threonine 27 is subject to Phosphothreonine. A Phosphotyrosine; by SRC and HCK modification is found at tyrosine 28. Residues 78-104 (RAASASPYTPEHAASVPTHSPYAQPSS) form a disordered region. Residues 94 to 104 (PTHSPYAQPSS) show a composition bias toward polar residues. Position 99 is a phosphotyrosine (tyrosine 99). Residues 131-310 (FQQSSTAKSA…DRKADEDHYR (180 aa)) form a DNA-binding region. Zn(2+)-binding residues include cysteine 194, histidine 197, cysteine 258, and cysteine 262. Over residues 301 to 311 (DRKADEDHYRE) the composition is skewed to basic and acidic residues. Residues 301 to 351 (DRKADEDHYREQQALNESSAKNGAASKRAFKQSPPAVPALGPGVKKRRHGD) form a disordered region. The interval 345–380 (KKRRHGDEDTYYLQVRGRENFEILMKLKESLELMEL) is interaction with HIPK2. The segment at 345–386 (KKRRHGDEDTYYLQVRGRENFEILMKLKESLELMELVPQPLV) is oligomerization. Residues 483-487 (PPPPY) carry the PPxY motif motif. The 67-residue stretch at 485-551 (PPYHADPSLV…WRGLQDLKQG (67 aa)) folds into the SAM domain. A Glycyl lysine isopeptide (Lys-Gly) (interchain with G-Cter in SUMO); in isoform Alpha cross-link involves residue lysine 628. Lysine 628 is covalently cross-linked (Glycyl lysine isopeptide (Lys-Gly) (interchain with G-Cter in SUMO2)).

Belongs to the p53 family. In terms of assembly, found in a complex with p53/TP53 and CABLES1. The C-terminal oligomerization domain binds to the ABL1 tyrosine kinase SH3 domain. Interacts with HECW2. Isoforms Alpha and Beta interact with HIPK2. Isoform Alpha interacts with RANBP9. Interacts with WWOX. Isoform Beta interacts homotypically and with p53, whereas isoform Alpha does not. Interacts (via SAM domain) with FBXO45 (via B30.2/SPRY domain). Interacts with YAP1 (phosphorylated form). Interacts with HCK (via SH3 domain); this inhibits TP73 activity and degradation. The cofactor is Zn(2+). Isoform Alpha (but not isoform Beta) is sumoylated on Lys-628, which potentiates proteasomal degradation but does not affect transcriptional activity. In terms of processing, polyubiquitinated by RCHY1/PIRH2; leading to its degradation by the proteasome.

It localises to the nucleus. It is found in the cytoplasm. Its function is as follows. Participates in the apoptotic response to DNA damage. May be a tumor suppressor protein. Is an activator of FOXJ1 expression, essential for the positive regulation of lung ciliated cell differentiation. The sequence is that of Tumor protein p73 (TP73) from Chlorocebus aethiops (Green monkey).